We begin with the raw amino-acid sequence, 479 residues long: Ribosomal protein uS12 methylthiotransferase RimO (479 aa).

The interval 1–34 (MTVNTFDPSKASPVTHASDSASKTPEPNAVAAPS) is disordered. Residues 15-25 (THASDSASKTP) are compositionally biased toward polar residues. Residues 39 to 151 (NRVGFVSLGC…VMGAVHGYIP (113 aa)) enclose the MTTase N-terminal domain. Positions 48, 84, 113, 184, 188, and 191 each coordinate [4Fe-4S] cluster. The 238-residue stretch at 170–407 (LTPRHYAYLK…METQQAISAA (238 aa)) folds into the Radical SAM core domain. The TRAM domain occupies 410–476 (KQKVGYEMDV…DYDLTGIAVE (67 aa)).

It belongs to the methylthiotransferase family. RimO subfamily. [4Fe-4S] cluster serves as cofactor.

Its subcellular location is the cytoplasm. The enzyme catalyses L-aspartate(89)-[ribosomal protein uS12]-hydrogen + (sulfur carrier)-SH + AH2 + 2 S-adenosyl-L-methionine = 3-methylsulfanyl-L-aspartate(89)-[ribosomal protein uS12]-hydrogen + (sulfur carrier)-H + 5'-deoxyadenosine + L-methionine + A + S-adenosyl-L-homocysteine + 2 H(+). Functionally, catalyzes the methylthiolation of an aspartic acid residue of ribosomal protein uS12. The chain is Ribosomal protein uS12 methylthiotransferase RimO from Saccharophagus degradans (strain 2-40 / ATCC 43961 / DSM 17024).